The sequence spans 314 residues: Olfactory receptor 9A4 (314 aa).

The Extracellular portion of the chain corresponds to 1-24 (MLMNYSSATEFYLLGFPGSEELHH). Asparagine 4 carries N-linked (GlcNAc...) asparagine glycosylation. A helical transmembrane segment spans residues 25 to 45 (ILFAIFFFFYLVTLMGNTVII). Residues 46–53 (MIVCVDKR) are Cytoplasmic-facing. Residues 54-74 (LQSPMYFFLGHLSALEILVTT) traverse the membrane as a helical segment. Residues 75 to 99 (IIVPVMLWGLLLPGMQTIYLSACVV) lie on the Extracellular side of the membrane. A disulfide bond links cysteine 97 and cysteine 189. A helical transmembrane segment spans residues 100 to 120 (QLFLYLAVGTTEFALLGAMAV). At 121–139 (DRYVAVCNPLRYNIIMNRH) the chain is on the cytoplasmic side. The chain crosses the membrane as a helical span at residues 140–160 (TCNFVVLVSWVFGFLFQIWPV). Residues 161–197 (YVMFQLTYCKSNVVNNFFCDRGQLLKLSCNNTLFTEF) lie on the Extracellular side of the membrane. Asparagine 190 is a glycosylation site (N-linked (GlcNAc...) asparagine). Residues 198–217 (ILFLMAVFVLFGSLIPTIVS) traverse the membrane as a helical segment. Residues 218–237 (NAYIISTILKIPSSSGRRKS) are Cytoplasmic-facing. Residues 238-258 (FSTCASHFTCVVIGYGSCLFL) form a helical membrane-spanning segment. Topologically, residues 259-271 (YVKPKQTQAADYN) are extracellular. A helical membrane pass occupies residues 272–292 (WVVSLMVSVVTPFLNPFIFTL). Over 293-314 (RNDKVIEALRDGVKRCCQLFRN) the chain is Cytoplasmic.

It belongs to the G-protein coupled receptor 1 family.

Its subcellular location is the cell membrane. Functionally, odorant receptor. The protein is Olfactory receptor 9A4 (OR9A4) of Homo sapiens (Human).